The sequence spans 172 residues: 3-hydroxydecanoyl-[acyl-carrier-protein] dehydratase (172 aa).

Histidine 71 is a catalytic residue.

Belongs to the thioester dehydratase family. FabA subfamily. Homodimer.

Its subcellular location is the cytoplasm. It carries out the reaction a (3R)-hydroxyacyl-[ACP] = a (2E)-enoyl-[ACP] + H2O. The catalysed reaction is (3R)-hydroxydecanoyl-[ACP] = (2E)-decenoyl-[ACP] + H2O. It catalyses the reaction (2E)-decenoyl-[ACP] = (3Z)-decenoyl-[ACP]. The protein operates within lipid metabolism; fatty acid biosynthesis. In terms of biological role, necessary for the introduction of cis unsaturation into fatty acids. Catalyzes the dehydration of (3R)-3-hydroxydecanoyl-ACP to E-(2)-decenoyl-ACP and then its isomerization to Z-(3)-decenoyl-ACP. Can catalyze the dehydratase reaction for beta-hydroxyacyl-ACPs with saturated chain lengths up to 16:0, being most active on intermediate chain length. The chain is 3-hydroxydecanoyl-[acyl-carrier-protein] dehydratase from Salmonella arizonae (strain ATCC BAA-731 / CDC346-86 / RSK2980).